The following is a 283-amino-acid chain: Phosphatidylglycerol--prolipoprotein diacylglyceryl transferase (283 aa).

4 helical membrane-spanning segments follow: residues L17–G37, F56–Y76, W92–F112, and G117–S137. R139 lines the a 1,2-diacyl-sn-glycero-3-phospho-(1'-sn-glycerol) pocket. Transmembrane regions (helical) follow at residues P194 to F214, G222 to A242, and G255 to V275.

This sequence belongs to the Lgt family.

The protein localises to the cell inner membrane. It carries out the reaction L-cysteinyl-[prolipoprotein] + a 1,2-diacyl-sn-glycero-3-phospho-(1'-sn-glycerol) = an S-1,2-diacyl-sn-glyceryl-L-cysteinyl-[prolipoprotein] + sn-glycerol 1-phosphate + H(+). It functions in the pathway protein modification; lipoprotein biosynthesis (diacylglyceryl transfer). Its function is as follows. Catalyzes the transfer of the diacylglyceryl group from phosphatidylglycerol to the sulfhydryl group of the N-terminal cysteine of a prolipoprotein, the first step in the formation of mature lipoproteins. This chain is Phosphatidylglycerol--prolipoprotein diacylglyceryl transferase, found in Neisseria meningitidis serogroup A / serotype 4A (strain DSM 15465 / Z2491).